The chain runs to 486 residues: Maintenance of mitochondrial morphology protein 1 (486 aa).

At Met-1 to Gly-23 the chain is on the lumenal side. Residues Phe-24 to Phe-44 traverse the membrane as a helical segment. At Gly-45–Gln-486 the chain is on the cytoplasmic side. Residues Ser-52–Ser-103 are disordered. Residues Ser-67–Ser-84 are compositionally biased toward low complexity. The span at Pro-92 to Ser-103 shows a compositional bias: polar residues. Residues Gln-140 to Pro-389 enclose the SMP-LTD domain. A compositionally biased stretch (low complexity) spans Ala-413–Ala-426. Positions Ala-413 to Gln-486 are disordered.

This sequence belongs to the MMM1 family. As to quaternary structure, homodimer. Component of the ER-mitochondria encounter structure (ERMES) or MDM complex, composed of mmm1, mdm10, mdm12 and mdm34. A mmm1 homodimer associates with one molecule of mdm12 on each side in a pairwise head-to-tail manner, and the SMP-LTD domains of mmm1 and mdm12 generate a continuous hydrophobic tunnel for phospholipid trafficking.

The protein localises to the endoplasmic reticulum membrane. In terms of biological role, component of the ERMES/MDM complex, which serves as a molecular tether to connect the endoplasmic reticulum (ER) and mitochondria. Components of this complex are involved in the control of mitochondrial shape and protein biogenesis, and function in nonvesicular lipid trafficking between the ER and mitochondria. The mdm12-mmm1 subcomplex functions in the major beta-barrel assembly pathway that is responsible for biogenesis of all outer membrane beta-barrel proteins, and acts in a late step after the SAM complex. The mdm10-mdm12-mmm1 subcomplex further acts in the TOM40-specific pathway after the action of the mdm12-mmm1 complex. Essential for establishing and maintaining the structure of mitochondria and maintenance of mtDNA nucleoids. The polypeptide is Maintenance of mitochondrial morphology protein 1 (Talaromyces marneffei (strain ATCC 18224 / CBS 334.59 / QM 7333) (Penicillium marneffei)).